Reading from the N-terminus, the 894-residue chain is UPF0182 protein GSU2333 (894 aa).

Transmembrane regions (helical) follow at residues Phe6–Phe26, Val50–Phe70, Met98–Gly118, Lys162–Phe182, Leu203–Val223, Ile250–Ala270, and Leu275–Met295.

This sequence belongs to the UPF0182 family.

The protein localises to the cell membrane. In Geobacter sulfurreducens (strain ATCC 51573 / DSM 12127 / PCA), this protein is UPF0182 protein GSU2333.